A 317-amino-acid chain; its full sequence is Ubiquinone biosynthesis protein COQ9-A, mitochondrial (317 aa).

Residues 1-46 (MAASVTRVLKGAGGRQLLLMVARRRPVLMQPFLLMPRKFWVSSALR) constitute a mitochondrion transit peptide. A disordered region spans residues 50–97 (QRQPPFSASSTHAETQGHAEEQYQQKQPPPRYTDQAGEESEGYESEEQ). The segment covering 53–63 (PPFSASSTHAE) has biased composition (polar residues). Acidic residues predominate over residues 85–96 (AGEESEGYESEE). R243 contributes to the a 1,2-diacylglycero-3-phosphoethanolamine binding site.

It belongs to the COQ9 family. As to quaternary structure, homodimer. Heterodimer; two heterodimers of COQ7:COQ9 come together on the same side of the lipid pseudo-bilayer and form a curved tetramer with a hydrophobic surface suitable for membrane interaction. These two tetramers assemble into a soluble octamer with a pseudo-bilayer of lipids captured within. Interacts with COQ7; this interaction allows ubiquinone (CoQ) isoprene intermediates presentation to COQ7 and facilitates the COQ7-mediated hydroxylase step.

The protein resides in the mitochondrion. It participates in cofactor biosynthesis; ubiquinone biosynthesis. Functionally, membrane-associated protein that warps the membrane surface to access and bind aromatic isoprenes with high specificity, including ubiquinone (CoQ) isoprene intermediates and presents them directly to COQ7, therefore facilitating the COQ7-mediated hydroxylase step. Participates in the biosynthesis of coenzyme Q, also named ubiquinone, an essential lipid-soluble electron transporter for aerobic cellular respiration. This chain is Ubiquinone biosynthesis protein COQ9-A, mitochondrial (coq9-a), found in Xenopus laevis (African clawed frog).